Here is a 347-residue protein sequence, read N- to C-terminus: Ornithine carbamoyltransferase (347 aa).

Residues 56–59 (STRT), Gln83, Arg107, and 134–137 (HPTQ) contribute to the carbamoyl phosphate site. Residues Asn168, Asp232, and 236–237 (SM) each bind L-ornithine. Carbamoyl phosphate contacts are provided by residues 274–275 (CL) and Arg320.

Belongs to the aspartate/ornithine carbamoyltransferase superfamily. OTCase family.

It is found in the cytoplasm. It catalyses the reaction carbamoyl phosphate + L-ornithine = L-citrulline + phosphate + H(+). Functionally, reversibly catalyzes the transfer of the carbamoyl group from carbamoyl phosphate (CP) to the N(epsilon) atom of ornithine (ORN) to produce L-citrulline. In Blochmanniella floridana, this protein is Ornithine carbamoyltransferase.